The primary structure comprises 251 residues: Flap endonuclease Xni (251 aa).

D104 contributes to the Mg(2+) binding site. The 5'-3' exonuclease domain maps to 160-249; it reads VQPQQLPDYW…IDGNLQQLRL (90 aa). The K(+) site is built by L171, A172, P180, V182, and I185. The tract at residues 184–189 is interaction with DNA; the sequence is GIGPKS.

This sequence belongs to the Xni family. The cofactor is Mg(2+). K(+) serves as cofactor.

Has flap endonuclease activity. During DNA replication, flap endonucleases cleave the 5'-overhanging flap structure that is generated by displacement synthesis when DNA polymerase encounters the 5'-end of a downstream Okazaki fragment. This is Flap endonuclease Xni from Escherichia coli O81 (strain ED1a).